Here is a 324-residue protein sequence, read N- to C-terminus: Putative HTH-type transcriptional regulatory protein UNCMA_15260 (324 aa).

The HTH cro/C1-type domain maps to 132-189 (LRSLREAKNISLGELAMALGVSRRTISKYESGMNATIEAALKLEEILDAPIACPVNMI). The H-T-H motif DNA-binding region spans 143-162 (LGELAMALGVSRRTISKYES).

This Methanocella arvoryzae (strain DSM 22066 / NBRC 105507 / MRE50) protein is Putative HTH-type transcriptional regulatory protein UNCMA_15260.